Reading from the N-terminus, the 81-residue chain is Centromere protein X (81 aa).

Met-1 bears the N-acetylmethionine mark.

The protein belongs to the CENP-X/MHF2 family. As to quaternary structure, heterodimer with CENPX, sometimes called MHF; this interaction stabilizes both partners. MHF heterodimers can assemble to form tetrameric structures. MHF also coassemble with CENPT-CENPW heterodimers at centromeres to form the tetrameric CENP-T-W-S-X complex. Forms a discrete complex with FANCM and CENPX, called FANCM-MHF; this interaction, probably mediated by direct binding between CENPS and FANCM, leads to synergistic activation of double-stranded DNA binding and strongly stimulates FANCM-mediated DNA remodeling. Recruited by FANCM to the Fanconi anemia (FA) core complex, which consists of CENPS, CENPX, FANCA, FANCB, FANCC, FANCE, FANCF, FANCG, FANCL, FANCM, FAAP24 and FAAP100. The FA core complex associates with Bloom syndrome (BLM) complex, which consists of at least BLM, DNA topoisomerase 3-alpha (TOP3A), RMI1/BLAP75, RPA1/RPA70 and RPA2/RPA32. The super complex between FA and BLM is called BRAFT.

It is found in the nucleus. The protein resides in the chromosome. Its subcellular location is the centromere. The protein localises to the kinetochore. Its function is as follows. DNA-binding component of the Fanconi anemia (FA) core complex. Required for the normal activation of the FA pathway, leading to monoubiquitination of the FANCI-FANCD2 complex in response to DNA damage, cellular resistance to DNA cross-linking drugs, and prevention of chromosomal breakage. In complex with CENPS (MHF heterodimer), crucial cofactor for FANCM in both binding and ATP-dependent remodeling of DNA. Stabilizes FANCM. In complex with CENPS and FANCM (but not other FANC proteins), rapidly recruited to blocked forks and promotes gene conversion at blocked replication forks. In complex with CENPS, CENPT and CENPW (CENP-T-W-S-X heterotetramer), involved in the formation of a functional kinetochore outer plate, which is essential for kinetochore-microtubule attachment and faithful mitotic progression. As a component of MHF and CENP-T-W-S-X complexes, binds DNA and bends it to form a nucleosome-like structure. DNA-binding function is fulfilled in the presence of CENPS, with the following preference for DNA substates: Holliday junction &gt; double-stranded &gt; splay arm &gt; single-stranded. Does not bind DNA on its own. The sequence is that of Centromere protein X (CENPX) from Homo sapiens (Human).